A 981-amino-acid chain; its full sequence is DNA ligase 4 (981 aa).

Positions 320, 322, 327, 380, 424, 484, 489, 506, and 508 each coordinate ATP. Lys-322 serves as the catalytic N6-AMP-lysine intermediate. Glu-380 lines the Mg(2+) pocket. Residue Glu-484 coordinates Mg(2+). The disordered stretch occupies residues 544-563 (SEKNNPSSYESGSDSDSDSE). 2 consecutive BRCT domains span residues 721 to 819 (SKAD…PKYV) and 875 to 980 (ERLL…EYAA).

Belongs to the ATP-dependent DNA ligase family. Mg(2+) is required as a cofactor.

The protein localises to the nucleus. It carries out the reaction ATP + (deoxyribonucleotide)n-3'-hydroxyl + 5'-phospho-(deoxyribonucleotide)m = (deoxyribonucleotide)n+m + AMP + diphosphate.. Functionally, DNA ligase involved in DNA non-homologous end joining (NHEJ); required for double-strand break (DSB) repair. This is DNA ligase 4 (LIG4) from Eremothecium gossypii (strain ATCC 10895 / CBS 109.51 / FGSC 9923 / NRRL Y-1056) (Yeast).